Reading from the N-terminus, the 463-residue chain is tRNA modification GTPase MnmE (463 aa).

Residues arginine 27, glutamate 92, and lysine 131 each contribute to the (6S)-5-formyl-5,6,7,8-tetrahydrofolate site. The TrmE-type G domain maps to 234–386 (GIKLAIVGKP…LEDHLLKIYS (153 aa)). Residue asparagine 244 coordinates K(+). GTP is bound by residues 244–249 (NVGKSS), 263–269 (TNVAGTT), and 288–291 (DTAG). Position 248 (serine 248) interacts with Mg(2+). The K(+) site is built by threonine 263, valine 265, and threonine 268. Threonine 269 serves as a coordination point for Mg(2+). Lysine 463 is a (6S)-5-formyl-5,6,7,8-tetrahydrofolate binding site.

Belongs to the TRAFAC class TrmE-Era-EngA-EngB-Septin-like GTPase superfamily. TrmE GTPase family. As to quaternary structure, homodimer. Heterotetramer of two MnmE and two MnmG subunits. Requires K(+) as cofactor.

The protein resides in the cytoplasm. Exhibits a very high intrinsic GTPase hydrolysis rate. Involved in the addition of a carboxymethylaminomethyl (cmnm) group at the wobble position (U34) of certain tRNAs, forming tRNA-cmnm(5)s(2)U34. The protein is tRNA modification GTPase MnmE of Mycoplasmopsis synoviae (strain 53) (Mycoplasma synoviae).